The chain runs to 171 residues: Ribosome maturation factor RimM (171 aa).

The 74-residue stretch at 97-170 (KLNYFSWDHY…IIYMKLPVGL (74 aa)) folds into the PRC barrel domain.

This sequence belongs to the RimM family. In terms of assembly, binds ribosomal protein uS19.

It is found in the cytoplasm. Functionally, an accessory protein needed during the final step in the assembly of 30S ribosomal subunit, possibly for assembly of the head region. Essential for efficient processing of 16S rRNA. May be needed both before and after RbfA during the maturation of 16S rRNA. It has affinity for free ribosomal 30S subunits but not for 70S ribosomes. This chain is Ribosome maturation factor RimM, found in Azobacteroides pseudotrichonymphae genomovar. CFP2.